The primary structure comprises 351 residues: 3-dehydroquinate synthase (351 aa).

Residues threonine 126–threonine 127, lysine 138, and lysine 147 each bind NAD(+). Zn(2+) contacts are provided by glutamate 180, histidine 244, and histidine 260.

It belongs to the sugar phosphate cyclases superfamily. Dehydroquinate synthase family. The cofactor is Co(2+). Zn(2+) is required as a cofactor. It depends on NAD(+) as a cofactor.

The protein resides in the cytoplasm. It carries out the reaction 7-phospho-2-dehydro-3-deoxy-D-arabino-heptonate = 3-dehydroquinate + phosphate. It functions in the pathway metabolic intermediate biosynthesis; chorismate biosynthesis; chorismate from D-erythrose 4-phosphate and phosphoenolpyruvate: step 2/7. Catalyzes the conversion of 3-deoxy-D-arabino-heptulosonate 7-phosphate (DAHP) to dehydroquinate (DHQ). This chain is 3-dehydroquinate synthase, found in Exiguobacterium sp. (strain ATCC BAA-1283 / AT1b).